A 447-amino-acid polypeptide reads, in one-letter code: Alkylglycerol monooxygenase (447 aa).

Transmembrane regions (helical) follow at residues 43–63 (ATPF…ILKG) and 111–131 (WDST…YYWF). A Fatty acid hydroxylase domain is found at 119-249 (FTFLGVDFGY…LIIWDRIFGT (131 aa)). Positions 132–136 (HRMAH) match the Histidine box-1 motif. The Histidine box-2 signature appears at 145–149 (HQAHH). The chain crosses the membrane as a helical span at residues 170–190 (SWVFYCPLALFIPPSVFAVHI). Positions 221–225 (HRVHH) match the Histidine box-3 motif. Helical transmembrane passes span 340–360 (VLQF…TAVL), 363–383 (VTLL…GFLL), and 413–433 (IPSL…FWGV).

The protein belongs to the sterol desaturase family. TMEM195 subfamily. It depends on Fe cation as a cofactor. As to expression, highly expressed in lever and small intestine.

It is found in the endoplasmic reticulum membrane. It catalyses the reaction 1-O-(1,2-saturated-alkyl)-sn-glycerol + (6R)-L-erythro-5,6,7,8-tetrahydrobiopterin + O2 = a 1-(1-hydroxyalkyl)-sn-glycerol + (6R)-L-erythro-6,7-dihydrobiopterin + H2O. Functionally, glyceryl-ether monooxygenase that cleaves the O-alkyl bond of ether lipids. Ether lipids are essential components of brain membranes. This Mus musculus (Mouse) protein is Alkylglycerol monooxygenase (Agmo).